Consider the following 154-residue polypeptide: Cyanate hydratase (154 aa).

Catalysis depends on residues arginine 100, glutamate 103, and serine 126.

It belongs to the cyanase family.

It catalyses the reaction cyanate + hydrogencarbonate + 3 H(+) = NH4(+) + 2 CO2. Catalyzes the reaction of cyanate with bicarbonate to produce ammonia and carbon dioxide. The polypeptide is Cyanate hydratase (Aspergillus fumigatus (strain ATCC MYA-4609 / CBS 101355 / FGSC A1100 / Af293) (Neosartorya fumigata)).